The sequence spans 210 residues: Protein HEADING DATE REPRESSOR 1 (210 aa).

The interval 1 to 97 (MEEPASADPP…GKRSSAEMLL (97 aa)) is disordered. Positions 29–49 (QQELNKEAADEQLNNQAHEEA) form a coiled coil. Composition is skewed to basic and acidic residues over residues 45 to 54 (AHEEAMKIDD) and 62 to 79 (DDVH…RKAL). Residues 129-184 (RRIAIQEMNRKDREINGLNEQLEEDSRVLELLQKQLADERKKRTEIEKENSMLHEQ) adopt a coiled-coil conformation.

In terms of assembly, interacts with OSK3 and OSK4. Mostly expressed in leaves, seedlings and floral organs, and, to a lower extent, in panicle, roots, nodes, internodes, leaf joint and sheath.

Its subcellular location is the nucleus. Regulates flowering time via a photoperiod-dependent pathway. Suppressor of flowering that upregulates HD1 and down-regulates EHD1 in long days (LD), thus leading to the down-regulation of HD3A and RFT1. Triggers OSK4-mediated HD1 phosphorylation. In Oryza sativa subsp. japonica (Rice), this protein is Protein HEADING DATE REPRESSOR 1.